Here is a 428-residue protein sequence, read N- to C-terminus: Histidine--tRNA ligase (428 aa).

This sequence belongs to the class-II aminoacyl-tRNA synthetase family. Homodimer.

The protein resides in the cytoplasm. It catalyses the reaction tRNA(His) + L-histidine + ATP = L-histidyl-tRNA(His) + AMP + diphosphate + H(+). This chain is Histidine--tRNA ligase, found in Mesomycoplasma hyopneumoniae (strain 7448) (Mycoplasma hyopneumoniae).